The following is a 248-amino-acid chain: 2,3-bisphosphoglycerate-dependent phosphoglycerate mutase (248 aa).

Substrate is bound by residues arginine 9 to asparagine 16, threonine 22 to glycine 23, arginine 61, glutamate 88 to tyrosine 91, lysine 99, arginine 115 to arginine 116, and glycine 183 to asparagine 184. Residue histidine 10 is the Tele-phosphohistidine intermediate of the active site. Residue glutamate 88 is the Proton donor/acceptor of the active site.

Belongs to the phosphoglycerate mutase family. BPG-dependent PGAM subfamily.

The catalysed reaction is (2R)-2-phosphoglycerate = (2R)-3-phosphoglycerate. It participates in carbohydrate degradation; glycolysis; pyruvate from D-glyceraldehyde 3-phosphate: step 3/5. Catalyzes the interconversion of 2-phosphoglycerate and 3-phosphoglycerate. In Arthrobacter sp. (strain FB24), this protein is 2,3-bisphosphoglycerate-dependent phosphoglycerate mutase.